Reading from the N-terminus, the 504-residue chain is D-alanine--D-alanyl carrier protein ligase (504 aa).

152 to 153 serves as a coordination point for ATP; sequence TS. Residue Asp197 participates in D-alanine binding. 292–297 is an ATP binding site; it reads NTYGPT. Position 301 (Val301) interacts with D-alanine. ATP contacts are provided by residues Asp383, 394-397, and Lys492; that span reads YNGR. A D-alanine-binding site is contributed by Lys492.

Belongs to the ATP-dependent AMP-binding enzyme family. DltA subfamily.

The protein localises to the cytoplasm. It carries out the reaction holo-[D-alanyl-carrier protein] + D-alanine + ATP = D-alanyl-[D-alanyl-carrier protein] + AMP + diphosphate. The protein operates within cell wall biogenesis; lipoteichoic acid biosynthesis. Its function is as follows. Catalyzes the first step in the D-alanylation of lipoteichoic acid (LTA), the activation of D-alanine and its transfer onto the D-alanyl carrier protein (Dcp) DltC. In an ATP-dependent two-step reaction, forms a high energy D-alanyl-AMP intermediate, followed by transfer of the D-alanyl residue as a thiol ester to the phosphopantheinyl prosthetic group of the Dcp. D-alanylation of LTA plays an important role in modulating the properties of the cell wall in Gram-positive bacteria, influencing the net charge of the cell wall. This chain is D-alanine--D-alanyl carrier protein ligase, found in Bacillus cereus (strain ZK / E33L).